The chain runs to 272 residues: Cytochrome c oxidase subunit 3 (272 aa).

7 helical membrane passes run 20–40 (PWPL…VLFM), 45–65 (GGGE…FTWW), 89–109 (GMIL…WAFF), 128–148 (VVAI…LSSG), 166–186 (AMQG…MQGF), 204–224 (FYMA…FLFI), and 248–268 (YWHF…WWGF).

It belongs to the cytochrome c oxidase subunit 3 family. As to quaternary structure, component of the cytochrome c oxidase (complex IV, CIV), a multisubunit enzyme composed of a catalytic core of 3 subunits and several supernumerary subunits. The complex exists as a monomer or a dimer and forms supercomplexes (SCs) in the inner mitochondrial membrane with ubiquinol-cytochrome c oxidoreductase (cytochrome b-c1 complex, complex III, CIII).

The protein resides in the mitochondrion inner membrane. The catalysed reaction is 4 Fe(II)-[cytochrome c] + O2 + 8 H(+)(in) = 4 Fe(III)-[cytochrome c] + 2 H2O + 4 H(+)(out). Its function is as follows. Component of the cytochrome c oxidase, the last enzyme in the mitochondrial electron transport chain which drives oxidative phosphorylation. The respiratory chain contains 3 multisubunit complexes succinate dehydrogenase (complex II, CII), ubiquinol-cytochrome c oxidoreductase (cytochrome b-c1 complex, complex III, CIII) and cytochrome c oxidase (complex IV, CIV), that cooperate to transfer electrons derived from NADH and succinate to molecular oxygen, creating an electrochemical gradient over the inner membrane that drives transmembrane transport and the ATP synthase. Cytochrome c oxidase is the component of the respiratory chain that catalyzes the reduction of oxygen to water. Electrons originating from reduced cytochrome c in the intermembrane space (IMS) are transferred via the dinuclear copper A center (CU(A)) of subunit 2 and heme A of subunit 1 to the active site in subunit 1, a binuclear center (BNC) formed by heme A3 and copper B (CU(B)). The BNC reduces molecular oxygen to 2 water molecules using 4 electrons from cytochrome c in the IMS and 4 protons from the mitochondrial matrix. The sequence is that of Cytochrome c oxidase subunit 3 (COX3) from Pylaiella littoralis (Seaweed).